We begin with the raw amino-acid sequence, 297 residues long: 33 kDa chaperonin (297 aa).

Cystine bridges form between Cys-232-Cys-234 and Cys-266-Cys-269.

The protein belongs to the HSP33 family. Post-translationally, under oxidizing conditions two disulfide bonds are formed involving the reactive cysteines. Under reducing conditions zinc is bound to the reactive cysteines and the protein is inactive.

It is found in the cytoplasm. In terms of biological role, redox regulated molecular chaperone. Protects both thermally unfolding and oxidatively damaged proteins from irreversible aggregation. Plays an important role in the bacterial defense system toward oxidative stress. This Pseudomonas aeruginosa (strain LESB58) protein is 33 kDa chaperonin.